Consider the following 221-residue polypeptide: D-glycero-alpha-D-manno-heptose 1-phosphate guanylyltransferase (221 aa).

It belongs to the D-alpha-D-heptose-1-P guanylyltransferase family.

It catalyses the reaction D-glycero-alpha-D-manno-heptose 1-phosphate + GTP + H(+) = GDP-D-glycero-alpha-D-manno-heptose + diphosphate. It functions in the pathway nucleotide-sugar biosynthesis; GDP-D-glycero-alpha-D-manno-heptose biosynthesis; GDP-D-glycero-alpha-D-manno-heptose from D-glycero-alpha-D-manno-heptose 7-phosphate: step 3/3. Its pathway is capsule biogenesis; capsule polysaccharide biosynthesis. In terms of biological role, catalyzes the GDP transfer from GTP to D-glycero-alpha-D-manno-heptose 1-phosphate, yielding GDP-D-alpha-D-heptose. Is able to use ATP, CTP or UTP as substrate in the presence of pyrophosphatase, but at a significantly slower rate. Can also form GDP-alpha-D-mannose from alpha-D-mannose 1-phosphate and GTP. This Campylobacter jejuni subsp. jejuni serotype O:2 (strain ATCC 700819 / NCTC 11168) protein is D-glycero-alpha-D-manno-heptose 1-phosphate guanylyltransferase.